A 365-amino-acid polypeptide reads, in one-letter code: Isoflavone 4'-O-methyltransferase (365 aa).

Residues 207–210 (VAGG), D231, 231–232 (DQ), 251–252 (DM), and K265 each bind S-adenosyl-L-methionine. Catalysis depends on H269, which acts as the Proton acceptor.

It belongs to the class I-like SAM-binding methyltransferase superfamily. Cation-independent O-methyltransferase family. COMT subfamily.

It carries out the reaction a 4'-hydroxyisoflavone + S-adenosyl-L-methionine = a 4'-methoxyisoflavone + S-adenosyl-L-homocysteine + H(+). It catalyses the reaction (2R,3S)-2,4',7-trihydroxyisoflavanone + S-adenosyl-L-methionine = (2R,3S)-2,7-dihydroxy-4'-methoxyisoflavanone + S-adenosyl-L-homocysteine + H(+). In terms of biological role, 2-hydroxyisoflavanone 4'-O-methyltransferase involved in the biosynthesis of formononetin. Can use 2,7,4'-trihydroxyisoflavanone as substrate, but not daidzein. The chain is Isoflavone 4'-O-methyltransferase (HI4'OMT) from Lotus japonicus (Lotus corniculatus var. japonicus).